Reading from the N-terminus, the 458-residue chain is UPF0210 protein MmarC5_0151 (458 aa).

It belongs to the UPF0210 family.

This Methanococcus maripaludis (strain C5 / ATCC BAA-1333) protein is UPF0210 protein MmarC5_0151.